A 217-amino-acid chain; its full sequence is Probable transaldolase (217 aa).

Lysine 83 acts as the Schiff-base intermediate with substrate in catalysis.

The protein belongs to the transaldolase family. Type 3B subfamily.

It is found in the cytoplasm. The catalysed reaction is D-sedoheptulose 7-phosphate + D-glyceraldehyde 3-phosphate = D-erythrose 4-phosphate + beta-D-fructose 6-phosphate. Its pathway is carbohydrate degradation; pentose phosphate pathway; D-glyceraldehyde 3-phosphate and beta-D-fructose 6-phosphate from D-ribose 5-phosphate and D-xylulose 5-phosphate (non-oxidative stage): step 2/3. Functionally, transaldolase is important for the balance of metabolites in the pentose-phosphate pathway. The polypeptide is Probable transaldolase (Rhizobium meliloti (strain 1021) (Ensifer meliloti)).